The sequence spans 191 residues: Transcription factor E (191 aa).

The HTH TFE/IIEalpha-type domain occupies Arg-4–Pro-87. Residues Ala-170–Lys-191 are disordered. Residues Lys-174 to Lys-191 show a composition bias toward basic residues.

This sequence belongs to the TFE family. In terms of assembly, monomer. Interaction with RNA polymerase subunits RpoF and RpoE is necessary for Tfe stimulatory transcription activity. Able to interact with Tbp and RNA polymerase in the absence of DNA promoter. Interacts both with the preinitiation and elongation complexes.

Functionally, transcription factor that plays a role in the activation of archaeal genes transcribed by RNA polymerase. Facilitates transcription initiation by enhancing TATA-box recognition by TATA-box-binding protein (Tbp), and transcription factor B (Tfb) and RNA polymerase recruitment. Not absolutely required for transcription in vitro, but particularly important in cases where Tbp or Tfb function is not optimal. It dynamically alters the nucleic acid-binding properties of RNA polymerases by stabilizing the initiation complex and destabilizing elongation complexes. Seems to translocate with the RNA polymerase following initiation and acts by binding to the non template strand of the transcription bubble in elongation complexes. This chain is Transcription factor E, found in Pyrococcus horikoshii (strain ATCC 700860 / DSM 12428 / JCM 9974 / NBRC 100139 / OT-3).